The primary structure comprises 357 residues: Peptide chain release factor 1 (357 aa).

Gln-235 bears the N5-methylglutamine mark. Residues Lys-285–Glu-305 are disordered.

Belongs to the prokaryotic/mitochondrial release factor family. Methylated by PrmC. Methylation increases the termination efficiency of RF1.

The protein localises to the cytoplasm. Functionally, peptide chain release factor 1 directs the termination of translation in response to the peptide chain termination codons UAG and UAA. This Chlamydia pneumoniae (Chlamydophila pneumoniae) protein is Peptide chain release factor 1 (prfA).